Here is a 419-residue protein sequence, read N- to C-terminus: G protein-activated inward rectifier potassium channel 4 (419 aa).

At 1 to 86 the chain is on the cytoplasmic side; the sequence is MAGDSRNAMN…LFTTLVDLKW (86 aa). A Phosphoserine modification is found at Ser5. A helical transmembrane segment spans residues 87 to 111; that stretch reads RFNLLVFTMVYTITWLFFGFIWWLI. Topologically, residues 112 to 135 are extracellular; that stretch reads AYVRGDLDHVGDQEWIPCVENLSG. The helical; Pore-forming intramembrane region spans 136 to 147; sequence FVSAFLFSIETE. Positions 148–154 form an intramembrane region, pore-forming; sequence TTIGYGF. A Selectivity filter motif is present at residues 149 to 154; it reads TIGYGF. The Extracellular segment spans residues 155–163; the sequence is RVITEKCPE. Residues 164–185 traverse the membrane as a helical segment; that stretch reads GIILLLVQAILGSIVNAFMVGC. Over 186–419 the chain is Cytoplasmic; it reads MFVKISQPKK…SVSRATRGSM (234 aa). Positions 380-390 are enriched in low complexity; that stretch reads LPSPPLLGGCA. Residues 380–419 form a disordered region; the sequence is LPSPPLLGGCAEAEKEAEAEHDEEEEPNGLSVSRATRGSM. Residues 409–419 are compositionally biased toward polar residues; it reads LSVSRATRGSM.

Belongs to the inward rectifier-type potassium channel (TC 1.A.2.1) family. KCNJ5 subfamily. Associates with KCNJ3/GIRK1 or KCNJ6/GRIK2 to form a G-protein-activated heteromultimer pore-forming unit. The resulting inward current is much larger. Most abundant in heart tissue where it is found predominantly in atria. Also found in brain, kidney, liver, spleen, lung and thymus.

It localises to the membrane. It catalyses the reaction K(+)(in) = K(+)(out). Heteromultimer composed of KCNJ3/GIRK1 and KCNJ5/GIRK4 is activated by phosphatidylinositol 4,5 biphosphate (PtdIns(4,5)P2). Functionally, inward rectifier potassium channels are characterized by a greater tendency to allow potassium to flow into the cell rather than out of it. Their voltage dependence is regulated by the concentration of extracellular potassium; as external potassium is raised, the voltage range of the channel opening shifts to more positive voltages. The inward rectification is mainly due to the blockage of outward current by internal magnesium. Can be blocked by external barium. This potassium channel is controlled by G proteins. This Rattus norvegicus (Rat) protein is G protein-activated inward rectifier potassium channel 4 (Kcnj5).